A 144-amino-acid polypeptide reads, in one-letter code: uncharacterized protein (144 aa).

The signal sequence occupies residues 1–23 (MVIPLRNKYGILFLIAVCIMVSG). Residues 119-144 (QNGQRKTMTRIESKTGREEKDEKSKS) form a disordered region. The segment covering 127–144 (TRIESKTGREEKDEKSKS) has biased composition (basic and acidic residues).

This is an uncharacterized protein from Bacillus subtilis (strain 168).